Here is a 121-residue protein sequence, read N- to C-terminus: ATP synthase epsilon chain (121 aa).

It belongs to the ATPase epsilon chain family. As to quaternary structure, F-type ATPases have 2 components, CF(1) - the catalytic core - and CF(0) - the membrane proton channel. CF(1) has five subunits: alpha(3), beta(3), gamma(1), delta(1), epsilon(1). CF(0) has three main subunits: a, b and c.

It localises to the cell membrane. In terms of biological role, produces ATP from ADP in the presence of a proton gradient across the membrane. The chain is ATP synthase epsilon chain from Mycobacterium marinum (strain ATCC BAA-535 / M).